The primary structure comprises 301 residues: Homoserine O-acetyltransferase (301 aa).

The active-site Acyl-thioester intermediate is the Cys-142. Residues Lys-163 and Ser-192 each coordinate substrate. The active-site Proton acceptor is the His-235. The active site involves Glu-237. Arg-249 provides a ligand contact to substrate.

This sequence belongs to the MetA family.

Its subcellular location is the cytoplasm. It catalyses the reaction L-homoserine + acetyl-CoA = O-acetyl-L-homoserine + CoA. It functions in the pathway amino-acid biosynthesis; L-methionine biosynthesis via de novo pathway; O-acetyl-L-homoserine from L-homoserine: step 1/1. Functionally, transfers an acetyl group from acetyl-CoA to L-homoserine, forming acetyl-L-homoserine. In Bacillus cereus (strain ZK / E33L), this protein is Homoserine O-acetyltransferase.